A 52-amino-acid chain; its full sequence is Repressor-like protein SSo7c3 (52 aa).

A SpoVT-AbrB domain is found at 4–51 (EEVVKVSRNYQVTIPAKVRQKFPVKEGDLVKVIYDENGGVVKIQILDS).

This Saccharolobus solfataricus (strain ATCC 35092 / DSM 1617 / JCM 11322 / P2) (Sulfolobus solfataricus) protein is Repressor-like protein SSo7c3.